We begin with the raw amino-acid sequence, 631 residues long: tRNA uridine 5-carboxymethylaminomethyl modification enzyme MnmG (631 aa).

15 to 20 is an FAD binding site; it reads GAGHAG. Residues 214 to 233 form a disordered region; it reads YSKTEEEPGDKEPRHFSFTS. 276 to 290 serves as a coordination point for NAD(+); it reads GPRYCPSIETKVVRF.

This sequence belongs to the MnmG family. Homodimer. Heterotetramer of two MnmE and two MnmG subunits. The cofactor is FAD.

The protein localises to the cytoplasm. In terms of biological role, NAD-binding protein involved in the addition of a carboxymethylaminomethyl (cmnm) group at the wobble position (U34) of certain tRNAs, forming tRNA-cmnm(5)s(2)U34. This chain is tRNA uridine 5-carboxymethylaminomethyl modification enzyme MnmG, found in Lactobacillus delbrueckii subsp. bulgaricus (strain ATCC 11842 / DSM 20081 / BCRC 10696 / JCM 1002 / NBRC 13953 / NCIMB 11778 / NCTC 12712 / WDCM 00102 / Lb 14).